We begin with the raw amino-acid sequence, 354 residues long: UDP-N-acetylglucosamine--N-acetylmuramyl-(pentapeptide) pyrophosphoryl-undecaprenol N-acetylglucosamine transferase (354 aa).

Residues T11–G13, R164, S194, and Q289 contribute to the UDP-N-acetyl-alpha-D-glucosamine site.

It belongs to the glycosyltransferase 28 family. MurG subfamily.

The protein localises to the cell membrane. The enzyme catalyses di-trans,octa-cis-undecaprenyl diphospho-N-acetyl-alpha-D-muramoyl-L-alanyl-D-glutamyl-meso-2,6-diaminopimeloyl-D-alanyl-D-alanine + UDP-N-acetyl-alpha-D-glucosamine = di-trans,octa-cis-undecaprenyl diphospho-[N-acetyl-alpha-D-glucosaminyl-(1-&gt;4)]-N-acetyl-alpha-D-muramoyl-L-alanyl-D-glutamyl-meso-2,6-diaminopimeloyl-D-alanyl-D-alanine + UDP + H(+). Its pathway is cell wall biogenesis; peptidoglycan biosynthesis. In terms of biological role, cell wall formation. Catalyzes the transfer of a GlcNAc subunit on undecaprenyl-pyrophosphoryl-MurNAc-pentapeptide (lipid intermediate I) to form undecaprenyl-pyrophosphoryl-MurNAc-(pentapeptide)GlcNAc (lipid intermediate II). The sequence is that of UDP-N-acetylglucosamine--N-acetylmuramyl-(pentapeptide) pyrophosphoryl-undecaprenol N-acetylglucosamine transferase from Clostridium botulinum (strain Loch Maree / Type A3).